Reading from the N-terminus, the 403-residue chain is Acetate kinase (403 aa).

Asn-9 serves as a coordination point for Mg(2+). Lys-16 is an ATP binding site. Substrate is bound at residue Arg-93. Asp-150 (proton donor/acceptor) is an active-site residue. Residues His-210–Gly-214, Asp-284–Arg-286, and Gly-332–Asn-336 contribute to the ATP site. Glu-388 contacts Mg(2+).

It belongs to the acetokinase family. As to quaternary structure, homodimer. Requires Mg(2+) as cofactor. It depends on Mn(2+) as a cofactor.

The protein localises to the cytoplasm. It carries out the reaction acetate + ATP = acetyl phosphate + ADP. It functions in the pathway metabolic intermediate biosynthesis; acetyl-CoA biosynthesis; acetyl-CoA from acetate: step 1/2. Its function is as follows. Catalyzes the formation of acetyl phosphate from acetate and ATP. Can also catalyze the reverse reaction. In Corynebacterium jeikeium (strain K411), this protein is Acetate kinase.